Reading from the N-terminus, the 353-residue chain is Photosystem II protein D1 (353 aa).

Thr-2 is modified (N-acetylthreonine). At Thr-2 the chain carries Phosphothreonine. 3 consecutive transmembrane segments (helical) span residues 29 to 46 (YIGW…TATS), 118 to 133 (HFLL…EWEL), and 142 to 156 (WIAV…AATA). His-118 provides a ligand contact to chlorophyll a. Tyr-126 contacts pheophytin a. [CaMn4O5] cluster-binding residues include Asp-170 and Glu-189. The helical transmembrane segment at 197–218 (FHMLGVAGVFGGSLFSAMHGSL) threads the bilayer. Residue His-198 participates in chlorophyll a binding. Residues His-215 and 264–265 (SF) each bind a quinone. Fe cation is bound at residue His-215. His-272 contributes to the Fe cation binding site. Residues 274–288 (FLAAWPVVGIWFTAL) traverse the membrane as a helical segment. 4 residues coordinate [CaMn4O5] cluster: His-332, Glu-333, Asp-342, and Ala-344. The propeptide occupies 345–353 (AVEANSIDG).

It belongs to the reaction center PufL/M/PsbA/D family. As to quaternary structure, PSII is composed of 1 copy each of membrane proteins PsbA, PsbB, PsbC, PsbD, PsbE, PsbF, PsbH, PsbI, PsbJ, PsbK, PsbL, PsbM, PsbT, PsbX, PsbY, PsbZ, Psb30/Ycf12, at least 3 peripheral proteins of the oxygen-evolving complex and a large number of cofactors. It forms dimeric complexes. Requires The D1/D2 heterodimer binds P680, chlorophylls that are the primary electron donor of PSII, and subsequent electron acceptors. It shares a non-heme iron and each subunit binds pheophytin, quinone, additional chlorophylls, carotenoids and lipids. D1 provides most of the ligands for the Mn4-Ca-O5 cluster of the oxygen-evolving complex (OEC). There is also a Cl(-1) ion associated with D1 and D2, which is required for oxygen evolution. The PSII complex binds additional chlorophylls, carotenoids and specific lipids. as cofactor. Post-translationally, tyr-161 forms a radical intermediate that is referred to as redox-active TyrZ, YZ or Y-Z. In terms of processing, C-terminally processed by CTPA; processing is essential to allow assembly of the oxygen-evolving complex and thus photosynthetic growth.

It localises to the plastid. It is found in the chloroplast thylakoid membrane. The catalysed reaction is 2 a plastoquinone + 4 hnu + 2 H2O = 2 a plastoquinol + O2. Photosystem II (PSII) is a light-driven water:plastoquinone oxidoreductase that uses light energy to abstract electrons from H(2)O, generating O(2) and a proton gradient subsequently used for ATP formation. It consists of a core antenna complex that captures photons, and an electron transfer chain that converts photonic excitation into a charge separation. The D1/D2 (PsbA/PsbD) reaction center heterodimer binds P680, the primary electron donor of PSII as well as several subsequent electron acceptors. The sequence is that of Photosystem II protein D1 from Cryptomeria japonica (Japanese cedar).